The chain runs to 438 residues: High-affinity gluconate transporter (438 aa).

Transmembrane regions (helical) follow at residues 2–22 (PLVI…RFKM), 23–43 (NGFI…GMPL), 52–72 (AGVG…AMLG), 108–128 (VGFA…VFTI), 134–154 (IPLL…HGFL), 174–194 (TLLY…PVYA), 222–242 (FGVS…RAIA), 258–278 (FLGD…FTFG), 292–312 (LVSS…GGAF), 327–347 (SMMH…AAVL), 349–369 (IALG…APLI), 370–390 (ATTG…SVIF), and 418–438 (MLET…NMVI).

This sequence belongs to the GntP permease family.

It is found in the cell inner membrane. It participates in carbohydrate acid metabolism; D-gluconate degradation. Functionally, part of the gluconate utilization system Gnt-I; high-affinity intake of gluconate. The chain is High-affinity gluconate transporter (gntT) from Escherichia coli (strain K12).